Reading from the N-terminus, the 333-residue chain is Nuclear egress protein 1 (333 aa).

Residues 45–64 form a disordered region; that stretch reads SRRYKSVSRSGPSMRVRSRT. The segment at 128–251 adopts a CCCH-type zinc-finger fold; sequence CLSLSGMGYH…YVIFPGKSVH (124 aa).

It belongs to the herpesviridae NEC1 protein family. Forms a heterohexameric complex with NEC2. Interacts with capsid vertex specific component 2/CVC2; this interaction directs the capsid to the host inner nuclear membrane to initiate budding. Phosphorylated at serine residues in the N-terminus. This phosphorylation regulates the localization within the inner nuclear membrane.

It localises to the host nucleus inner membrane. Functionally, plays an essential role in virion nuclear egress, the first step of virion release from infected cell. Within the host nucleus, NEC1 interacts with the newly formed capsid through the vertexes and directs it to the inner nuclear membrane by associating with NEC2. Induces the budding of the capsid at the inner nuclear membrane as well as its envelopment into the perinuclear space. There, the NEC1/NEC2 complex promotes the fusion of the enveloped capsid with the outer nuclear membrane and the subsequent release of the viral capsid into the cytoplasm where it will reach the secondary budding sites in the host Golgi or trans-Golgi network. The protein is Nuclear egress protein 1 of Varicella-zoster virus (strain Dumas) (HHV-3).